The primary structure comprises 469 residues: Small ribosomal subunit protein mS29 (469 aa).

L150 contributes to the ATP binding site.

The protein belongs to the mitochondrion-specific ribosomal protein mS29 family. Component of the mitochondrial small ribosomal subunit (mt-SSU). Mature N.crassa 74S mitochondrial ribosomes consist of a small (37S) and a large (54S) subunit. The 37S small subunit contains a 16S ribosomal RNA (16S mt-rRNA) and 32 different proteins. The 54S large subunit contains a 23S rRNA (23S mt-rRNA) and 42 different proteins.

It localises to the mitochondrion. Functionally, component of the mitochondrial ribosome (mitoribosome), a dedicated translation machinery responsible for the synthesis of mitochondrial genome-encoded proteins, including at least some of the essential transmembrane subunits of the mitochondrial respiratory chain. The mitoribosomes are attached to the mitochondrial inner membrane and translation products are cotranslationally integrated into the membrane. The chain is Small ribosomal subunit protein mS29 (rsm23) from Neurospora crassa (strain ATCC 24698 / 74-OR23-1A / CBS 708.71 / DSM 1257 / FGSC 987).